Consider the following 213-residue polypeptide: Citrate synthase, mitochondrial (213 aa).

Residue H74 is part of the active site. An N6-acetyllysine; alternate mark is found at K94 and K100. N6-succinyllysine; alternate occurs at positions 94 and 100. H120 is a catalytic residue. R129 lines the oxaloacetate pocket. K148 carries the post-translational modification N6-acetyllysine; alternate. K148 is subject to N6-succinyllysine; alternate. N6-acetyllysine is present on K155. K166 carries the N6-acetyllysine; alternate modification. The residue at position 166 (K166) is an N6-succinyllysine; alternate. K168 bears the N6,N6,N6-trimethyllysine mark. The active site involves D175. R201 serves as a coordination point for oxaloacetate.

It belongs to the citrate synthase family. In terms of assembly, homodimer. In terms of processing, in response to mitochondrial stress, the precursor protein is ubiquitinated by the SIFI complex in the cytoplasm before mitochondrial import, leading to its degradation. Within the SIFI complex, UBR4 initiates ubiquitin chain that are further elongated or branched by KCMF1.

The protein localises to the mitochondrion matrix. The enzyme catalyses oxaloacetate + acetyl-CoA + H2O = citrate + CoA + H(+). It functions in the pathway carbohydrate metabolism; tricarboxylic acid cycle; isocitrate from oxaloacetate: step 1/2. Its function is as follows. Key enzyme of the Krebs tricarboxylic acid cycle which catalyzes the synthesis of citrate from acetyl coenzyme A and oxaloacetate. The polypeptide is Citrate synthase, mitochondrial (Mesocricetus auratus (Golden hamster)).